The following is a 239-amino-acid chain: Geranylgeranylglyceryl phosphate synthase (239 aa).

Mg(2+)-binding residues include Asp-18 and Ser-45. Residues 166 to 172 (YLEAGSG), 197 to 198 (GG), and 219 to 220 (GT) contribute to the sn-glycerol 1-phosphate site.

It belongs to the GGGP/HepGP synthase family. Group II subfamily. The cofactor is Mg(2+).

It is found in the cytoplasm. It catalyses the reaction sn-glycerol 1-phosphate + (2E,6E,10E)-geranylgeranyl diphosphate = sn-3-O-(geranylgeranyl)glycerol 1-phosphate + diphosphate. The protein operates within membrane lipid metabolism; glycerophospholipid metabolism. Prenyltransferase that catalyzes the transfer of the geranylgeranyl moiety of geranylgeranyl diphosphate (GGPP) to the C3 hydroxyl of sn-glycerol-1-phosphate (G1P). This reaction is the first ether-bond-formation step in the biosynthesis of archaeal membrane lipids. The polypeptide is Geranylgeranylglyceryl phosphate synthase (Pyrobaculum islandicum (strain DSM 4184 / JCM 9189 / GEO3)).